Reading from the N-terminus, the 367-residue chain is Protein RecA (367 aa).

73–80 (GPESSGKT) is a binding site for ATP. The tract at residues 345 to 367 (DEPVAKKASAKESKEAKELKEVE) is disordered.

This sequence belongs to the RecA family.

Its subcellular location is the cytoplasm. Functionally, can catalyze the hydrolysis of ATP in the presence of single-stranded DNA, the ATP-dependent uptake of single-stranded DNA by duplex DNA, and the ATP-dependent hybridization of homologous single-stranded DNAs. It interacts with LexA causing its activation and leading to its autocatalytic cleavage. In Herminiimonas arsenicoxydans, this protein is Protein RecA.